The sequence spans 376 residues: Phosphoserine aminotransferase (376 aa).

Arg42 contacts L-glutamate. The pyridoxal 5'-phosphate site is built by Trp104, Thr163, Asp188, and Gln211. Lys212 bears the N6-(pyridoxal phosphate)lysine mark. A pyridoxal 5'-phosphate-binding site is contributed by 253–254 (NT).

This sequence belongs to the class-V pyridoxal-phosphate-dependent aminotransferase family. SerC subfamily. In terms of assembly, homodimer. It depends on pyridoxal 5'-phosphate as a cofactor.

It is found in the cytoplasm. It carries out the reaction O-phospho-L-serine + 2-oxoglutarate = 3-phosphooxypyruvate + L-glutamate. It catalyses the reaction 4-(phosphooxy)-L-threonine + 2-oxoglutarate = (R)-3-hydroxy-2-oxo-4-phosphooxybutanoate + L-glutamate. It participates in amino-acid biosynthesis; L-serine biosynthesis; L-serine from 3-phospho-D-glycerate: step 2/3. Its pathway is cofactor biosynthesis; pyridoxine 5'-phosphate biosynthesis; pyridoxine 5'-phosphate from D-erythrose 4-phosphate: step 3/5. Its function is as follows. Catalyzes the reversible conversion of 3-phosphohydroxypyruvate to phosphoserine and of 3-hydroxy-2-oxo-4-phosphonooxybutanoate to phosphohydroxythreonine. In Bordetella avium (strain 197N), this protein is Phosphoserine aminotransferase.